We begin with the raw amino-acid sequence, 297 residues long: Large ribosomal subunit protein uL15m (297 aa).

The transit peptide at 1–22 (MAGPVRGAAGPWALDLLRALPR) directs the protein to the mitochondrion. A disordered region spans residues 27 to 68 (NLRPNPGSRKPERRRRGQRRGRKCGRGHKGERQRGTRPRLGF). Residues 37–53 (PERRRRGQRRGRKCGRG) show a composition bias toward basic residues.

This sequence belongs to the universal ribosomal protein uL15 family. Component of the mitochondrial ribosome large subunit (39S) which comprises a 16S rRNA and about 50 distinct proteins.

The protein localises to the mitochondrion. The protein is Large ribosomal subunit protein uL15m (MRPL15) of Bos taurus (Bovine).